The primary structure comprises 95 residues: Aspartyl/glutamyl-tRNA(Asn/Gln) amidotransferase subunit C (95 aa).

Belongs to the GatC family. In terms of assembly, heterotrimer of A, B and C subunits.

It carries out the reaction L-glutamyl-tRNA(Gln) + L-glutamine + ATP + H2O = L-glutaminyl-tRNA(Gln) + L-glutamate + ADP + phosphate + H(+). It catalyses the reaction L-aspartyl-tRNA(Asn) + L-glutamine + ATP + H2O = L-asparaginyl-tRNA(Asn) + L-glutamate + ADP + phosphate + 2 H(+). Allows the formation of correctly charged Asn-tRNA(Asn) or Gln-tRNA(Gln) through the transamidation of misacylated Asp-tRNA(Asn) or Glu-tRNA(Gln) in organisms which lack either or both of asparaginyl-tRNA or glutaminyl-tRNA synthetases. The reaction takes place in the presence of glutamine and ATP through an activated phospho-Asp-tRNA(Asn) or phospho-Glu-tRNA(Gln). The chain is Aspartyl/glutamyl-tRNA(Asn/Gln) amidotransferase subunit C from Geobacter sulfurreducens (strain ATCC 51573 / DSM 12127 / PCA).